Reading from the N-terminus, the 500-residue chain is NAD(P)H-quinone oxidoreductase chain 4, chloroplastic (500 aa).

A run of 14 helical transmembrane segments spans residues 4 to 24, 35 to 55, 87 to 107, 113 to 130, 134 to 154, 167 to 187, 211 to 231, 242 to 262, 272 to 292, 305 to 325, 330 to 350, 386 to 406, 416 to 436, and 462 to 482; these read FPWLTIIVVFPISAGSLMLFL, YTICICILELLITTYAFCYNF, IGTILLTGFITTLATLAAFPV, LFHFLMLAMYSGQIGSFS, LLLFFIMWELELIPVYLLLSM, FILYTAGSSIFLLIGVLGISL, IILYIGFLIAFAVKSPLIPLH, HYSTCMLLAGILLKMGAYGLV, AHSLFSPWLMVVGTIQIIYAA, IAYSSVSHMGFIIIGIASITD, GAILQIISHGFIGAALFFLAG, LALPGMSGFVAEFIVFFGIIT, IFIIVVMAIGMILTPIYLLSM, and LFLSISSLLPIIGMGIYPDFV.

The protein belongs to the complex I subunit 4 family.

Its subcellular location is the plastid. It localises to the chloroplast thylakoid membrane. It catalyses the reaction a plastoquinone + NADH + (n+1) H(+)(in) = a plastoquinol + NAD(+) + n H(+)(out). It carries out the reaction a plastoquinone + NADPH + (n+1) H(+)(in) = a plastoquinol + NADP(+) + n H(+)(out). In Aethionema cordifolium (Lebanon stonecress), this protein is NAD(P)H-quinone oxidoreductase chain 4, chloroplastic.